The primary structure comprises 278 residues: Ribosomal RNA small subunit methyltransferase J (278 aa).

S-adenosyl-L-methionine contacts are provided by residues 143-144 (ER) and Asp197.

This sequence belongs to the methyltransferase superfamily. RsmJ family.

Its subcellular location is the cytoplasm. The catalysed reaction is guanosine(1516) in 16S rRNA + S-adenosyl-L-methionine = N(2)-methylguanosine(1516) in 16S rRNA + S-adenosyl-L-homocysteine + H(+). Specifically methylates the guanosine in position 1516 of 16S rRNA. This is Ribosomal RNA small subunit methyltransferase J from Marinobacter nauticus (strain ATCC 700491 / DSM 11845 / VT8) (Marinobacter aquaeolei).